Here is a 36-residue protein sequence, read N- to C-terminus: Hemoglobin subunit beta (36 aa).

In terms of domain architecture, Globin spans 1–36 (VCVLAHHFGKEFTPQVQAAYQKVVAGVANALAHKYH). N6-acetyllysine is present on Lys34.

It belongs to the globin family. Heterotetramer of two alpha chains and two beta chains. In terms of tissue distribution, red blood cells.

Its function is as follows. Involved in oxygen transport from the lung to the various peripheral tissues. The chain is Hemoglobin subunit beta (HBB) from Pongo pygmaeus (Bornean orangutan).